The chain runs to 1007 residues: Serine/threonine-protein kinase PRP4 homolog (1007 aa).

Positions 1–10 (MAAAETQSLR) are enriched in polar residues. The segment at 1–99 (MAAAETQSLR…EGMSPAKRTK (99 aa)) is disordered. N-acetylalanine is present on Ala-2. Residues Ser-8, Ser-20, Ser-23, and Ser-32 each carry the phosphoserine modification. Basic residues-rich tracts occupy residues 39–59 (KHSR…KHKH) and 67–81 (KKHK…HKRK). Positions 82–91 (EIIDASDKEG) are enriched in basic and acidic residues. 2 positions are modified to phosphoserine: Ser-87 and Ser-93. Lys-99 carries the post-translational modification N6-acetyllysine; alternate. Lys-99 is covalently cross-linked (Glycyl lysine isopeptide (Lys-Gly) (interchain with G-Cter in SUMO2); alternate). A Glycyl lysine isopeptide (Lys-Gly) (interchain with G-Cter in SUMO2) cross-link involves residue Lys-111. Lys-117 is covalently cross-linked (Glycyl lysine isopeptide (Lys-Gly) (interchain with G-Cter in SUMO2); alternate). Lys-117 is covalently cross-linked (Glycyl lysine isopeptide (Lys-Gly) (interchain with G-Cter in SUMO1); alternate). Position 131 is a phosphoserine (Ser-131). Residue Tyr-140 is modified to Phosphotyrosine. Disordered stretches follow at residues 140–533 (YESG…EEED) and 559–583 (SNMS…SPDD). Ser-142, Ser-144, and Ser-166 each carry phosphoserine. Residues 157–168 (GNRSSTRSSSTK) show a composition bias toward low complexity. Residues Lys-170 and Lys-177 each participate in a glycyl lysine isopeptide (Lys-Gly) (interchain with G-Cter in SUMO2) cross-link. 2 stretches are compositionally biased toward basic residues: residues 179-202 (TTKK…KKSK) and 214-230 (RSKS…SKRS). Residues Ser-239, Ser-241, Ser-257, Ser-277, Ser-283, Ser-292, and Ser-294 each carry the phosphoserine modification. Positions 247 to 270 (RSQEKIGKARSPTDDKVKIEDKSK) are enriched in basic and acidic residues. Basic residues predominate over residues 302 to 315 (SKDRRSRSKERKSK). Over residues 316–325 (RSETDKEKKP) the composition is skewed to basic and acidic residues. Phosphoserine occurs at positions 328, 354, 356, 366, and 368. The span at 342-367 (PSRRPGRSPKRRSLSPKPRDKSRRSR) shows a compositional bias: basic residues. Thr-385 carries the phosphothreonine modification. Position 387 is a phosphoserine (Ser-387). 2 stretches are compositionally biased toward basic and acidic residues: residues 395 to 408 (RSLE…ERRR) and 415 to 429 (RPRD…RSKD). 3 positions are modified to phosphoserine: Ser-427, Ser-431, and Ser-437. Residues 438 to 497 (PTRRRSRSPIRRRSRSPLRRSRSPRRRSRSPRRRDRGRRSRSRLRRRSRSRGGRRRRSRS) show a composition bias toward basic residues. Residues Ser-518, Ser-519, Ser-520, Ser-565, Ser-569, Ser-578, and Ser-580 each carry the phosphoserine modification. Residues 518–533 (SSSDDNLEDFDVEEED) show a composition bias toward acidic residues. The span at 562-581 (SVPSEPSSPQSSTRTRSPSP) shows a compositional bias: low complexity. Glycyl lysine isopeptide (Lys-Gly) (interchain with G-Cter in SUMO2) cross-links involve residues Lys-593 and Lys-659. A Protein kinase domain is found at 687-1006 (YNVYGYTGQG…ALQHAFIQEK (320 aa)). ATP contacts are provided by residues 693–701 (TGQGVFSNV) and Lys-717. N6-acetyllysine is present on Lys-717. The active-site Proton acceptor is Asp-815. Phosphotyrosine is present on Tyr-849. A Phosphoserine modification is found at Ser-852.

Belongs to the protein kinase superfamily. CMGC Ser/Thr protein kinase family. As to quaternary structure, interacts with CLK1 C-terminus. Associates with the U5 snRNP and NCOR1 deacetylase complexes. Identified in the spliceosome C complex. Phosphorylated by CLK1. Autophosphorylated; phosphorylation inhibits interaction with its targets, such as PRPF6 or SMARCA4. As to expression, ubiquitous.

The protein localises to the nucleus. It localises to the chromosome. It is found in the centromere. Its subcellular location is the kinetochore. The enzyme catalyses L-seryl-[protein] + ATP = O-phospho-L-seryl-[protein] + ADP + H(+). It carries out the reaction L-threonyl-[protein] + ATP = O-phospho-L-threonyl-[protein] + ADP + H(+). In terms of biological role, serine/threonine kinase involved in spliceosomal assembly as well as mitosis and signaling regulation. Connects chromatin mediated regulation of transcription and pre-mRNA splicing. During spliceosomal assembly, interacts with and phosphorylates PRPF6 and PRPF31, components of the U4/U6-U5 tri-small nuclear ribonucleoprotein (snRNP), to facilitate the formation of the spliceosome B complex. Plays a role in regulating transcription and the spindle assembly checkpoint (SAC). Associates with U5 snRNP and NCOR1 deacetylase complexes which may allow a coordination of pre-mRNA splicing with chromatin remodeling events involved in transcriptional regulation. Associates and probably phosphorylates SMARCA4 and NCOR1. Phosphorylates SRSF1. Associates with kinetochores during mitosis and is necessary for recruitment and maintenance of the checkpoint proteins such as MAD1L1 and MAD12L1 at the kinetochores. Phosphorylates and regulates the activity of the transcription factors such as ELK1 and KLF13. Phosphorylates nuclear YAP1 and WWTR1/TAZ which induces nuclear exclusion and regulates Hippo signaling pathway, involved in tissue growth control. The polypeptide is Serine/threonine-protein kinase PRP4 homolog (Homo sapiens (Human)).